A 216-amino-acid polypeptide reads, in one-letter code: Nucleoside triphosphate pyrophosphatase (216 aa).

The active-site Proton acceptor is D82.

It belongs to the Maf family. It depends on a divalent metal cation as a cofactor.

It localises to the cytoplasm. It catalyses the reaction a ribonucleoside 5'-triphosphate + H2O = a ribonucleoside 5'-phosphate + diphosphate + H(+). The catalysed reaction is a 2'-deoxyribonucleoside 5'-triphosphate + H2O = a 2'-deoxyribonucleoside 5'-phosphate + diphosphate + H(+). In terms of biological role, nucleoside triphosphate pyrophosphatase. May have a dual role in cell division arrest and in preventing the incorporation of modified nucleotides into cellular nucleic acids. The polypeptide is Nucleoside triphosphate pyrophosphatase (Mycobacterium ulcerans (strain Agy99)).